The chain runs to 289 residues: EGAEQDGSERTDGGRPIWNIAHMVNNKQAIDKYLDKGANSVESDVSFDSDGKPEKMLHGIPCDCGRKCLNQMSFTDYLDYMRQLTTPGDPKFRENLILIMLDLKLKSVAANLAYSSGQEVALQMLNTYWKRGESGARAYIVLSIPTIKRVTFVRGFYDKLHSEGFDQYREKVGVDFSGNEDLDETGRILSSQNILDHIWQSDGITNCIFRVMTRLKKAINKRDSNGYMVKVYYWSVDKYTIMRKTLRAGADGMITNFPDRLVSVLNEREFSGKFRLATYDDNPWERYKA.

Residues 1-2 form the signal peptide; it reads EG. Positions 3 to 11 are excised as a propeptide; that stretch reads AEQDGSERT. Histidine 22 is a catalytic residue. Mg(2+) contacts are provided by glutamate 42 and aspartate 44. Histidine 58 (nucleophile) is an active-site residue. 2 cysteine pairs are disulfide-bonded: cysteine 62–cysteine 68 and cysteine 64–cysteine 207. Aspartate 102 contacts Mg(2+).

This sequence belongs to the arthropod phospholipase D family. Class II subfamily. Requires Mg(2+) as cofactor. As to expression, expressed by the venom gland.

It localises to the secreted. It catalyses the reaction an N-(acyl)-sphingosylphosphocholine = an N-(acyl)-sphingosyl-1,3-cyclic phosphate + choline. The enzyme catalyses N-hexanoyl-sphing-4-enine-1-phosphocholine = N-(hexanoyl)-sphing-4-enine-1,3-cyclic phosphate + choline. The catalysed reaction is N-(dodecanoyl)-sphing-4-enine-1-phosphocholine = N-dodecanoyl-sphing-4-enine-1,3-cyclic phosphate + choline. It carries out the reaction an N-(acyl)-sphingosylphosphoethanolamine = an N-(acyl)-sphingosyl-1,3-cyclic phosphate + ethanolamine. It catalyses the reaction N-dodecanoyl-heptadecasphing-4-enine-1-phosphoethanolamine = N-dodecanoyl-heptadecasphing-4-enine-1,3-cyclic phosphate + ethanolamine. The enzyme catalyses a 1-acyl-sn-glycero-3-phosphocholine = a 1-acyl-sn-glycero-2,3-cyclic phosphate + choline. The catalysed reaction is 1-tetradecanoyl-sn-glycero-3-phosphocholine = 1-tetradecanoyl-sn-glycero-2,3-cyclic phosphate + choline. It carries out the reaction 1-octanoyl-sn-glycero-3-phosphocholine = 1-octanoyl-sn-glycero-2,3-cyclic phosphate + choline. It catalyses the reaction a 1-acyl-sn-glycero-3-phosphoethanolamine = a 1-acyl-sn-glycero-2,3-cyclic phosphate + ethanolamine. The enzyme catalyses 1-tetradecanoyl-sn-glycero-3-phosphoethanolamine = 1-tetradecanoyl-sn-glycero-2,3-cyclic phosphate + ethanolamine. In terms of biological role, dermonecrotic toxins cleave the phosphodiester linkage between the phosphate and headgroup of certain phospholipids (sphingolipid and lysolipid substrates), forming an alcohol (often choline) and a cyclic phosphate. This toxin acts on sphingomyelin (SM) and on ceramide phosphoethanolamine (CPE) with high activity. It also acts on lysophosphatidylcholine (LPC) and on lysophosphatidylethanolamine (LPE) with moderate activity. It is not active on lysophosphatidylserine (LPS), and lysophosphatidylglycerol (LPG). It acts by transphosphatidylation, releasing exclusively cyclic phosphate as second products. It is not surprising that spider toxins have affinity for ethanolamine-containing sphingolipids since they are common in insect prey. On mammals, induces dermonecrosis, hemolysis, increased vascular permeability, edema, inflammatory response, and platelet aggregation. This chain is Dermonecrotic toxin LarSicTox-betaID1, found in Loxosceles arizonica (Arizona brown spider).